The primary structure comprises 313 residues: MTQRVRIATRKSKLALWQAEHIQQRLEELHPGLSVELVPMSTKGDVILDTPLAKIGGKGLFVKELEVAMLEGRADIAVHSMKDLPVEFPPGLELHTICEREDPRDAFVSNNYKNLNELPEGAVVGTCSLRRRCQVKEQFPHLVIKDLRGNVQTRLRKLDEGEFDAIILAASGLIRLELGDRITSFIPVEQSLPANGQGALGIECRSDDDEMKALLAPLQCQETRTRVLAERAMNRGLDGGCQVPIGAYAELEGDEVYLRGLVGEPDGGKVLRDEVRGPASKAEELGSELAERLLKQGAAEILSAVYDSESSHS.

An S-(dipyrrolylmethanemethyl)cysteine modification is found at cysteine 241.

The protein belongs to the HMBS family. Monomer. Dipyrromethane is required as a cofactor.

The enzyme catalyses 4 porphobilinogen + H2O = hydroxymethylbilane + 4 NH4(+). The protein operates within porphyrin-containing compound metabolism; protoporphyrin-IX biosynthesis; coproporphyrinogen-III from 5-aminolevulinate: step 2/4. In terms of biological role, tetrapolymerization of the monopyrrole PBG into the hydroxymethylbilane pre-uroporphyrinogen in several discrete steps. This Idiomarina loihiensis (strain ATCC BAA-735 / DSM 15497 / L2-TR) protein is Porphobilinogen deaminase.